A 190-amino-acid polypeptide reads, in one-letter code: Glutathione peroxidase 2 (190 aa).

Selenocysteine 40 is an active-site residue. Position 40 (selenocysteine 40) is a non-standard amino acid, selenocysteine.

The protein belongs to the glutathione peroxidase family. Homotetramer.

It localises to the cytoplasm. The protein localises to the cytosol. It catalyses the reaction 2 glutathione + H2O2 = glutathione disulfide + 2 H2O. The enzyme catalyses a hydroperoxy polyunsaturated fatty acid + 2 glutathione = a hydroxy polyunsaturated fatty acid + glutathione disulfide + H2O. The catalysed reaction is tert-butyl hydroperoxide + 2 glutathione = tert-butanol + glutathione disulfide + H2O. It carries out the reaction cumene hydroperoxide + 2 glutathione = 2-phenylpropan-2-ol + glutathione disulfide + H2O. It catalyses the reaction (13S)-hydroperoxy-(9Z,11E)-octadecadienoate + 2 glutathione = (13S)-hydroxy-(9Z,11E)-octadecadienoate + glutathione disulfide + H2O. The enzyme catalyses (5S)-hydroperoxy-(6E,8Z,11Z,14Z)-eicosatetraenoate + 2 glutathione = (5S)-hydroxy-(6E,8Z,11Z,14Z)-eicosatetraenoate + glutathione disulfide + H2O. The catalysed reaction is (12R)-hydroperoxy-(5Z,8Z,10E,14Z)-eicosatetraenoate + 2 glutathione = (12R)-hydroxy-(5Z,8Z,10E,14Z)-eicosatetraenoate + glutathione disulfide + H2O. It carries out the reaction (15S)-hydroperoxy-(5Z,8Z,11Z,13E)-eicosatetraenoate + 2 glutathione = (15S)-hydroxy-(5Z,8Z,11Z,13E)-eicosatetraenoate + glutathione disulfide + H2O. In terms of biological role, catalyzes the reduction of hydroperoxides in a glutathione-dependent manner thus regulating cellular redox homeostasis. Can reduce small soluble hydroperoxides such as H2O2, cumene hydroperoxide and tert-butyl hydroperoxide, as well as several fatty acid-derived hydroperoxides. Cannot reduce phosphatidycholine hydroperoxide. The protein is Glutathione peroxidase 2 (GPX2) of Pongo pygmaeus (Bornean orangutan).